Reading from the N-terminus, the 1284-residue chain is MAYKIKKVNRGVERRDYRKVSGNLELPNLIEIQTKTFEWFKTKGIDEVLNEFFAMSSNDASASLFLEGWEIKEAKISPSKAKEQSKIYDAPIYVDLQLMFTKTEDISKEFEEIVEKDVKKVLSNWIAEKTDSKNVSLVKNTDNIYFFDVKLKGTEKNDLFQITILEEKEDIIVAEVSVRKWGQVFFGDFPLMTDAGTFVINGSQKVIVSQLVRSPGSYFKTEINNKTGESLYNGDIIPSRGTWLEFETDTKKTAETTNSLFVKIDKSRKTTATSFLKILGLDRDTILNIYDKDKVIVETLKNDNDTGDTYADWAQHVQEIYKKIRQGETATSDGASKYINGLLFDRRKYDLTKAGRFKLQQKLAVKNRLMGRILAEDIVDASGKILVAKNTEISKANIKEVSDALSQDGVMVSSIEYREDIPGSRQIQKVKVYQDNNSKDETFTIVGITPNSKEEHITVVDIVATVSYLLGLEYNIGEYDDIDNLANRRVRTVGELLQNQFRMGLTRIDKNVKEKLSTSDLYKVKVSTIINAKPLTAVIGEFFNLSQLSQFMDQINPLAELTNKRRLTALGPGGLSRDRASLEVRDVHPSHYGRICPIETPEGPNIGLINNLSTYAIVDELGFIRTPYLKVIDGVIQNEHEYLSADEEKEYIISQSNVTKDENGKILDETVVSHYKGDDYIAKVSEVQFIDVSPKQIVSVATSAIPFLENDDANRALMGANMQRQAVPTIVPESPFVGTGIEFEAARDSGVCIVATENGIVKYVDAKQITVESKAGIKTYTLANFERSNNGSSIVQKPIVKVGDSIEAGQIIADGPSVDNGELALGQNVVVAFTTYNGYNFEDAIVMSERVIMEDKFTSVHIDEYVLEVRNTKQGAEEITSEIPNISDNAKKYLDNEGIVAIGTEVKTGDILVGKVTPKGQTQLSPEDKLLHAIFGEKSRSVKDNSLKVPNGGEGIVQSVKRFKAKSAANPDGIDLPADVLEVIKVYIVQKRKIQEGDKMSGRHGNKGIISKVLPVEDMPHLEDGTPVDILLNPQGIPSRMNIGQILEIHLGMAAKKLGVKIATPVFEGVNSNDLDEIMAEAGMENYGKVKLIDGQTGEAIDKPISVGVMYMLKLSHMVDDKLHARSVGPYSLITQQPLGGKAQNGGQRFGEMEVWALEAYGAAHTLREILTIKSDDLKGRTKTYEAIVRSKNIPTPGTPESFNVLSKEIMGLGFDIYLLDNKGNKSQINAYDDDNDLINDESMKHASIDKLTFEDSISLVEIEDLDSFEEVDESEINLSFEEE.

The protein belongs to the RNA polymerase beta chain family. In terms of assembly, the RNAP catalytic core consists of 2 alpha, 1 beta, 1 beta' and 1 omega subunit. When a sigma factor is associated with the core the holoenzyme is formed, which can initiate transcription.

The enzyme catalyses RNA(n) + a ribonucleoside 5'-triphosphate = RNA(n+1) + diphosphate. DNA-dependent RNA polymerase catalyzes the transcription of DNA into RNA using the four ribonucleoside triphosphates as substrates. This chain is DNA-directed RNA polymerase subunit beta, found in Mesoplasma florum (strain ATCC 33453 / NBRC 100688 / NCTC 11704 / L1) (Acholeplasma florum).